Consider the following 271-residue polypeptide: Thiazole synthase (271 aa).

The Schiff-base intermediate with DXP role is filled by Lys95. 1-deoxy-D-xylulose 5-phosphate contacts are provided by residues Gly156, 182-183, and 204-205; these read AG and NT.

It belongs to the ThiG family. In terms of assembly, homotetramer. Forms heterodimers with either ThiH or ThiS.

It is found in the cytoplasm. The enzyme catalyses [ThiS sulfur-carrier protein]-C-terminal-Gly-aminoethanethioate + 2-iminoacetate + 1-deoxy-D-xylulose 5-phosphate = [ThiS sulfur-carrier protein]-C-terminal Gly-Gly + 2-[(2R,5Z)-2-carboxy-4-methylthiazol-5(2H)-ylidene]ethyl phosphate + 2 H2O + H(+). Its pathway is cofactor biosynthesis; thiamine diphosphate biosynthesis. Catalyzes the rearrangement of 1-deoxy-D-xylulose 5-phosphate (DXP) to produce the thiazole phosphate moiety of thiamine. Sulfur is provided by the thiocarboxylate moiety of the carrier protein ThiS. In vitro, sulfur can be provided by H(2)S. The sequence is that of Thiazole synthase from Yersinia pestis.